Consider the following 163-residue polypeptide: Ubiquitin-like protein 1-ribosomal protein eS31 fusion protein (163 aa).

The region spanning 1-70 (MVFVKTLHRT…IYVNLELLGG (70 aa)) is the Ubiquitin-like domain. A Glycyl lysine isopeptide (Gly-Lys) (interchain with K-? in acceptor proteins) cross-link involves residue Gly-70. Residues 115 to 138 (CQQPSCGGGVFMAQHANRHYCGRC) form a C4-type zinc finger.

In the N-terminal section; belongs to the ubiquitin family. It in the C-terminal section; belongs to the eukaryotic ribosomal protein eS31 family.

The protein is Ubiquitin-like protein 1-ribosomal protein eS31 fusion protein of Caenorhabditis elegans.